Consider the following 291-residue polypeptide: Small ribosomal subunit protein uS2 (291 aa).

The disordered stretch occupies residues 231-291 (NRGSGTTEAP…AAEAPAEDAK (61 aa)). A compositionally biased stretch (basic and acidic residues) spans 246–259 (EWERELLEGSKAEE). Over residues 260–285 (AAAAAPAENAEAPAAPAAEAPAAAEA) the composition is skewed to low complexity.

It belongs to the universal ribosomal protein uS2 family.

In Pseudarthrobacter chlorophenolicus (strain ATCC 700700 / DSM 12829 / CIP 107037 / JCM 12360 / KCTC 9906 / NCIMB 13794 / A6) (Arthrobacter chlorophenolicus), this protein is Small ribosomal subunit protein uS2.